A 2528-amino-acid chain; its full sequence is Reducing polyketide synthase PKS1 (2528 aa).

Residues 11 to 436 (ITPIAVVGMS…GANVHAILES (426 aa)) form the Ketosynthase family 3 (KS3) domain. Active-site for beta-ketoacyl synthase activity residues include cysteine 186, histidine 321, and histidine 359. A malonyl-CoA:ACP transacylase (MAT) region spans residues 573–868 (FVFTGQGAQW…LGGPISQVID (296 aa)). Positions 954 to 1092 (LDLIGVFDVH…GLISVLKSSK (139 aa)) are N-terminal hotdog fold. The 325-residue stretch at 954-1278 (LDLIGVFDVH…LVALDRPNSS (325 aa)) folds into the PKS/mFAS DH domain. The tract at residues 956-1277 (LIGVFDVHSS…TLVALDRPNS (322 aa)) is dehydratase (DH) domain. Histidine 986 (proton acceptor; for dehydratase activity) is an active-site residue. Residues 1122-1278 (KTEWDVKDMY…LVALDRPNSS (157 aa)) form a C-terminal hotdog fold region. Catalysis depends on aspartate 1187, which acts as the Proton donor; for dehydratase activity. Residues 1827-2139 (GLLDSLHFTV…TGRHMGKMVA (313 aa)) form an enoyl reductase (ER) domain region. Positions 2164-2341 (ASYLLVGGVG…ATVIDIGAVH (178 aa)) are ketoreductase (KR) domain. The region spanning 2442 to 2519 (SAVTIVLSAL…ALAVKIAARS (78 aa)) is the Carrier domain. Serine 2479 carries the post-translational modification O-(pantetheine 4'-phosphoryl)serine.

It participates in mycotoxin biosynthesis. Functionally, reducing polyketide synthase (PKS); part of the Tox1A locus, one of the 2 loci that mediate the biosynthesis of T-toxin, a family of linear polyketides 37 to 45 carbons in length, of which the major component is 41 carbons, and which leads to high virulence to maize. One of the PKSs (PKS1 or PKS2) could synthesize a precursor, used subsequently by the other PKS as starter unit, to add additional carbons. Variability in the length of the final carbon backbone C35-47 could be achieved by varying the number of condensation cycles, or use of different starter or extender units or might be due to decarboxylation of the penultimate product, catalyzed by DEC1. Additional proteins are required for the biosynthesis of T-toxin, including oxidoreductases RED1, RED2, RED3, LAM1 and OXI1, as well as esterase TOX9. The polypeptide is Reducing polyketide synthase PKS1 (Cochliobolus heterostrophus (strain C4 / ATCC 48331 / race T) (Southern corn leaf blight fungus)).